The chain runs to 443 residues: Signal recognition particle 54 kDa protein (443 aa).

GTP-binding positions include 107–114 (GVQGSGKT), 189–193 (DTAGR), and 247–250 (TKLD).

This sequence belongs to the GTP-binding SRP family. SRP54 subfamily. As to quaternary structure, part of the signal recognition particle protein translocation system, which is composed of SRP and FtsY. Archaeal SRP consists of a 7S RNA molecule of 300 nucleotides and two protein subunits: SRP54 and SRP19.

It is found in the cytoplasm. It carries out the reaction GTP + H2O = GDP + phosphate + H(+). Involved in targeting and insertion of nascent membrane proteins into the cytoplasmic membrane. Binds to the hydrophobic signal sequence of the ribosome-nascent chain (RNC) as it emerges from the ribosomes. The SRP-RNC complex is then targeted to the cytoplasmic membrane where it interacts with the SRP receptor FtsY. In Pyrococcus abyssi (strain GE5 / Orsay), this protein is Signal recognition particle 54 kDa protein.